The sequence spans 426 residues: Pyrophosphate--fructose 6-phosphate 1-phosphotransferase 2 (426 aa).

Diphosphate is bound at residue G15. Mg(2+) is bound at residue D114. Substrate contacts are provided by residues 140 to 142 (TID), 186 to 188 (MGR), E247, and 308 to 311 (YELR). The active-site Proton acceptor is the D142.

It belongs to the phosphofructokinase type A (PFKA) family. PPi-dependent PFK group II subfamily. Clade 'Short' sub-subfamily. As to quaternary structure, homotetramer. It depends on Mg(2+) as a cofactor.

It localises to the cytoplasm. It carries out the reaction beta-D-fructose 6-phosphate + diphosphate = beta-D-fructose 1,6-bisphosphate + phosphate + H(+). The protein operates within carbohydrate degradation; glycolysis; D-glyceraldehyde 3-phosphate and glycerone phosphate from D-glucose: step 3/4. With respect to regulation, non-allosteric. Functionally, catalyzes the phosphorylation of D-fructose 6-phosphate, the first committing step of glycolysis. Uses inorganic phosphate (PPi) as phosphoryl donor instead of ATP like common ATP-dependent phosphofructokinases (ATP-PFKs), which renders the reaction reversible, and can thus function both in glycolysis and gluconeogenesis. Consistently, PPi-PFK can replace the enzymes of both the forward (ATP-PFK) and reverse (fructose-bisphosphatase (FBPase)) reactions. In Trichomonas vaginalis (strain ATCC PRA-98 / G3), this protein is Pyrophosphate--fructose 6-phosphate 1-phosphotransferase 2 (pfk2).